A 516-amino-acid polypeptide reads, in one-letter code: 1-pyrroline-5-carboxylate dehydrogenase (516 aa).

Residues Glu287 and Cys321 contribute to the active site.

It belongs to the aldehyde dehydrogenase family. RocA subfamily.

The enzyme catalyses L-glutamate 5-semialdehyde + NAD(+) + H2O = L-glutamate + NADH + 2 H(+). It participates in amino-acid degradation; L-proline degradation into L-glutamate; L-glutamate from L-proline: step 2/2. This is 1-pyrroline-5-carboxylate dehydrogenase from Bacillus licheniformis (strain ATCC 14580 / DSM 13 / JCM 2505 / CCUG 7422 / NBRC 12200 / NCIMB 9375 / NCTC 10341 / NRRL NRS-1264 / Gibson 46).